A 1353-amino-acid chain; its full sequence is DNA-directed RNA polymerase subunit beta' (1353 aa).

The tract at residues 1-117 (MSDNRLFTSV…AFQKLNDLFK (117 aa)) is unknown. The interval 118-1353 (LYNHFPSISS…SELAEKTNQN (1236 aa)) is DNA-directed RNA polymerase subunit beta'. Zn(2+) contacts are provided by cysteine 189, cysteine 191, cysteine 203, and cysteine 206. Residues aspartate 578, aspartate 580, and aspartate 582 each contribute to the Mg(2+) site.

Belongs to the RNA polymerase beta' chain family. In terms of assembly, the RNAP catalytic core consists of 2 alpha, 1 beta, 1 beta' and 1 omega subunit. When a sigma factor is associated with the core the holoenzyme is formed, which can initiate transcription. Mg(2+) is required as a cofactor. Zn(2+) serves as cofactor.

The catalysed reaction is RNA(n) + a ribonucleoside 5'-triphosphate = RNA(n+1) + diphosphate. In terms of biological role, DNA-dependent RNA polymerase catalyzes the transcription of DNA into RNA using the four ribonucleoside triphosphates as substrates. The polypeptide is DNA-directed RNA polymerase subunit beta' (Onion yellows phytoplasma (strain OY-M)).